The sequence spans 320 residues: HPr kinase/phosphorylase (320 aa).

Active-site residues include His141 and Lys162. An ATP-binding site is contributed by 156 to 163 (GHSGLGKS). Ser163 contacts Mg(2+). The active-site Proton acceptor; for phosphorylation activity. Proton donor; for dephosphorylation activity is the Asp180. The segment at 204 to 213 (LEVRGLGILN) is important for the catalytic mechanism of both phosphorylation and dephosphorylation. Glu205 contacts Mg(2+). Residue Arg248 is part of the active site. The important for the catalytic mechanism of dephosphorylation stretch occupies residues 269–274 (PVAVGR).

The protein belongs to the HPrK/P family. Homohexamer. Mg(2+) serves as cofactor.

The enzyme catalyses [HPr protein]-L-serine + ATP = [HPr protein]-O-phospho-L-serine + ADP + H(+). The catalysed reaction is [HPr protein]-O-phospho-L-serine + phosphate + H(+) = [HPr protein]-L-serine + diphosphate. Functionally, catalyzes the ATP- as well as the pyrophosphate-dependent phosphorylation of a specific serine residue in HPr, a phosphocarrier protein of the phosphoenolpyruvate-dependent sugar phosphotransferase system (PTS). HprK/P also catalyzes the pyrophosphate-producing, inorganic phosphate-dependent dephosphorylation (phosphorolysis) of seryl-phosphorylated HPr (P-Ser-HPr). This is HPr kinase/phosphorylase from Neisseria gonorrhoeae (strain ATCC 700825 / FA 1090).